The chain runs to 374 residues: Chaperone protein DnaJ (374 aa).

Residues 5-70 (DFYEILGVSK…EKRSAYDRMG (66 aa)) form the J domain. The CR-type zinc finger occupies 133 to 211 (GCKKEISFTA…CHGNGVKDKS (79 aa)). Zn(2+) is bound by residues C146, C149, C163, C166, C185, C188, C199, and C202. CXXCXGXG motif repeat units lie at residues 146 to 153 (CDTCDGKG), 163 to 170 (CQTCHGQG), 185 to 192 (CPHCGGTG), and 199 to 206 (CSDCHGNG).

This sequence belongs to the DnaJ family. Homodimer. Zn(2+) serves as cofactor.

It is found in the cytoplasm. Participates actively in the response to hyperosmotic and heat shock by preventing the aggregation of stress-denatured proteins and by disaggregating proteins, also in an autonomous, DnaK-independent fashion. Unfolded proteins bind initially to DnaJ; upon interaction with the DnaJ-bound protein, DnaK hydrolyzes its bound ATP, resulting in the formation of a stable complex. GrpE releases ADP from DnaK; ATP binding to DnaK triggers the release of the substrate protein, thus completing the reaction cycle. Several rounds of ATP-dependent interactions between DnaJ, DnaK and GrpE are required for fully efficient folding. Also involved, together with DnaK and GrpE, in the DNA replication of plasmids through activation of initiation proteins. This Psychrobacter arcticus (strain DSM 17307 / VKM B-2377 / 273-4) protein is Chaperone protein DnaJ.